Here is a 346-residue protein sequence, read N- to C-terminus: Methylthioribose-1-phosphate isomerase (346 aa).

Residues Arg-54–Ala-56, Arg-91, and Gln-192 contribute to the substrate site. Asp-233 acts as the Proton donor in catalysis. Asn-243 to Lys-244 is a binding site for substrate.

It belongs to the eIF-2B alpha/beta/delta subunits family. MtnA subfamily.

It carries out the reaction 5-(methylsulfanyl)-alpha-D-ribose 1-phosphate = 5-(methylsulfanyl)-D-ribulose 1-phosphate. Its pathway is amino-acid biosynthesis; L-methionine biosynthesis via salvage pathway; L-methionine from S-methyl-5-thio-alpha-D-ribose 1-phosphate: step 1/6. In terms of biological role, catalyzes the interconversion of methylthioribose-1-phosphate (MTR-1-P) into methylthioribulose-1-phosphate (MTRu-1-P). In Yersinia pseudotuberculosis serotype O:1b (strain IP 31758), this protein is Methylthioribose-1-phosphate isomerase.